The chain runs to 252 residues: Imidazole glycerol phosphate synthase subunit HisF (252 aa).

Residues Asp13 and Asp132 contribute to the active site.

The protein belongs to the HisA/HisF family. In terms of assembly, heterodimer of HisH and HisF.

The protein resides in the cytoplasm. The catalysed reaction is 5-[(5-phospho-1-deoxy-D-ribulos-1-ylimino)methylamino]-1-(5-phospho-beta-D-ribosyl)imidazole-4-carboxamide + L-glutamine = D-erythro-1-(imidazol-4-yl)glycerol 3-phosphate + 5-amino-1-(5-phospho-beta-D-ribosyl)imidazole-4-carboxamide + L-glutamate + H(+). It participates in amino-acid biosynthesis; L-histidine biosynthesis; L-histidine from 5-phospho-alpha-D-ribose 1-diphosphate: step 5/9. IGPS catalyzes the conversion of PRFAR and glutamine to IGP, AICAR and glutamate. The HisF subunit catalyzes the cyclization activity that produces IGP and AICAR from PRFAR using the ammonia provided by the HisH subunit. This chain is Imidazole glycerol phosphate synthase subunit HisF, found in Campylobacter fetus subsp. fetus (strain 82-40).